The sequence spans 196 residues: Ribosome-binding factor A (196 aa).

The protein belongs to the RbfA family. In terms of assembly, monomer. Binds 30S ribosomal subunits, but not 50S ribosomal subunits or 70S ribosomes.

It localises to the cytoplasm. Its function is as follows. One of several proteins that assist in the late maturation steps of the functional core of the 30S ribosomal subunit. Associates with free 30S ribosomal subunits (but not with 30S subunits that are part of 70S ribosomes or polysomes). Required for efficient processing of 16S rRNA. May interact with the 5'-terminal helix region of 16S rRNA. This Tropheryma whipplei (strain TW08/27) (Whipple's bacillus) protein is Ribosome-binding factor A.